The following is a 215-amino-acid chain: Probable GTP-binding protein EngB (215 aa).

The EngB-type G domain occupies 26 to 200; it reads EGIEVAFAGR…RAKLDEWFAP (175 aa). GTP is bound by residues 34 to 41, 61 to 65, 79 to 82, 146 to 149, and 179 to 181; these read GRSNAGKS, GRTQL, DLPG, TKAD, and FSS. Mg(2+) is bound by residues Ser-41 and Thr-63.

This sequence belongs to the TRAFAC class TrmE-Era-EngA-EngB-Septin-like GTPase superfamily. EngB GTPase family. Requires Mg(2+) as cofactor.

Functionally, necessary for normal cell division and for the maintenance of normal septation. This is Probable GTP-binding protein EngB from Aliivibrio fischeri (strain ATCC 700601 / ES114) (Vibrio fischeri).